A 343-amino-acid chain; its full sequence is Ribosomal RNA small subunit methyltransferase, chloroplastic (343 aa).

A chloroplast-targeting transit peptide spans 1–48 (MMNAVITSATINCNSLSPSWTCGDNSPSKLLLGEISAALSRRRTVKVS). Residues His78, Met80, Gly105, Glu126, Asp151, and Asn183 each coordinate S-adenosyl-L-methionine.

The protein belongs to the class I-like SAM-binding methyltransferase superfamily. rRNA adenine N(6)-methyltransferase family.

The protein localises to the plastid. It is found in the chloroplast. Required for methylation of the 3' adenosines in the small subunit of plastid rRNA. Essential for chloroplast biogenesis at low temperatures. The polypeptide is Ribosomal RNA small subunit methyltransferase, chloroplastic (Arabidopsis thaliana (Mouse-ear cress)).